Reading from the N-terminus, the 158-residue chain is Globin CTT-I/CTT-IA (158 aa).

Positions 1-15 (MKFLILALCVAAAMA) are cleaved as a signal peptide. A Globin domain is found at 16–158 (GPSGDQIAAA…FVFSTLKNEL (143 aa)). Heme b is bound by residues His74 and His109.

It belongs to the globin family. In terms of assembly, monomer.

The protein is Globin CTT-I/CTT-IA (CTT-1) of Chironomus thummi thummi (Midge).